The primary structure comprises 133 residues: MSNHDPISDMLTRIRNASQKKHTSTSIPASRMILSIAKVLQKEGFIADINEEGEGYESKIVLGLKYSGKNRFPTIRSMQRVSKPGLRVYKNTKGLPKVLGGLGVAIVSTSKGVMSDRDARKQGIGGEVLCYVY.

The protein belongs to the universal ribosomal protein uS8 family. Part of the 30S ribosomal subunit. Contacts proteins S5 and S12.

One of the primary rRNA binding proteins, it binds directly to 16S rRNA central domain where it helps coordinate assembly of the platform of the 30S subunit. The chain is Small ribosomal subunit protein uS8 from Prochlorococcus marinus (strain MIT 9515).